We begin with the raw amino-acid sequence, 129 residues long: Ig lambda-1 chain V region S43 (129 aa).

Residues 1-19 (MAWISLILSLLALSSGAIS) form the signal peptide. At Gln-20 the chain carries Pyrrolidone carboxylic acid. An Ig-like domain is found at 20–125 (QAVVTQESAL…HWVFGGGTKL (106 aa)).

The sequence is that of Ig lambda-1 chain V region S43 from Mus musculus (Mouse).